A 351-amino-acid polypeptide reads, in one-letter code: MFTSLKKVATFSFLVWISQYSGSNSCSSSLVKHIPQTGSNLTFDRVLVEDTVHPEHLHEEHHHHHPEEHHEPHHEEHHHHHPEEHHEPHHEEHHHHHPHPHHHHHHHPPHHHHHLGHHHHHHHAAHHHHHEEHHHHHHAAHHHHHEEHHHHHHAAHHHPWFHHHHLGYHHHHAPHHHHHHHHAPHHHHHHHHAPHHHHHHHHAPHHHHHHHHAPHHHHHHHHGHHHHHHHHHGHHHHHHHHHGHHHHHHHHHDAHHHHHHHHDAHHHHHHHHDAHHHHHHHHDAHHHHHHHHDAHHHHHHHHDAHHHHHHHDAHHHHHHHHDAHHHHHHHHDAHHHHHHHHDAHHHHHHHH.

The N-terminal stretch at 1-23 (MFTSLKKVATFSFLVWISQYSGS) is a signal peptide. Positions 24-47 (NSCSSSLVKHIPQTGSNLTFDRVL) are excised as a propeptide. An N-linked (GlcNAc...) asparagine glycan is attached at Asn40. Positions 57–91 (LHEEHHHHHPEEHHEPHHEEHHHHHPEEHHEPHHE) are enriched in basic and acidic residues. A disordered region spans residues 57–351 (LHEEHHHHHP…DAHHHHHHHH (295 aa)). A run of 6 repeats spans residues 59–74 (EEHH…EPHH), 75–90 (EEHH…EPHH), 91–107 (EEHH…HHHH), 108–123 (PPHH…HHHH), 124–138 (AAHH…HHHH), and 139–153 (AAHH…HHHH). The interval 59-90 (EEHHHHHPEEHHEPHHEEHHHHHPEEHHEPHH) is 2 X 16 AA tandem repeats. Residues 91-123 (EEHHHHHPHPHHHHHHHPPHHHHHLGHHHHHHH) are 2 X 17 AA tandem repeats. Basic residues predominate over residues 92-351 (EHHHHHPHPH…DAHHHHHHHH (260 aa)). The interval 124–153 (AAHHHHHEEHHHHHHAAHHHHHEEHHHHHH) is 2 X 15 AA tandem repeats. Residues 173–351 (APHHHHHHHH…DAHHHHHHHH (179 aa)) are 18 X 10 AA tandem repeats.

This chain is Histidine-rich glycoprotein, found in Plasmodium lophurae.